The chain runs to 143 residues: MVIERTLSIIKPDAVAKNIIGEIYTRFENAGLRIVAARMLHLSKEQAQEFYTVHKDRPFYNDLVGFMTSGPVMVQVLEGENAIARNREIMGATNPKEAVPGTIRADFAENIDANAVHGSDGSGTAEQEINFFFKSEDICPRIG.

Residues Lys-11, Phe-59, Arg-87, Thr-93, Arg-104, and Asn-114 each coordinate ATP. Residue His-117 is the Pros-phosphohistidine intermediate of the active site.

Belongs to the NDK family. In terms of assembly, homotetramer. The cofactor is Mg(2+).

It is found in the cytoplasm. The enzyme catalyses a 2'-deoxyribonucleoside 5'-diphosphate + ATP = a 2'-deoxyribonucleoside 5'-triphosphate + ADP. It catalyses the reaction a ribonucleoside 5'-diphosphate + ATP = a ribonucleoside 5'-triphosphate + ADP. In terms of biological role, major role in the synthesis of nucleoside triphosphates other than ATP. The ATP gamma phosphate is transferred to the NDP beta phosphate via a ping-pong mechanism, using a phosphorylated active-site intermediate. This Nitrosococcus oceani (strain ATCC 19707 / BCRC 17464 / JCM 30415 / NCIMB 11848 / C-107) protein is Nucleoside diphosphate kinase.